The chain runs to 387 residues: Phosphoglycerate kinase (387 aa).

Substrate contacts are provided by residues 21–23, arginine 36, 59–62, arginine 113, and arginine 146; these read DLN and HLGR. ATP contacts are provided by residues lysine 197, glutamate 314, and 340–343; that span reads GGDT.

This sequence belongs to the phosphoglycerate kinase family. In terms of assembly, monomer.

The protein resides in the cytoplasm. It catalyses the reaction (2R)-3-phosphoglycerate + ATP = (2R)-3-phospho-glyceroyl phosphate + ADP. It participates in carbohydrate degradation; glycolysis; pyruvate from D-glyceraldehyde 3-phosphate: step 2/5. This Pseudomonas savastanoi pv. phaseolicola (strain 1448A / Race 6) (Pseudomonas syringae pv. phaseolicola (strain 1448A / Race 6)) protein is Phosphoglycerate kinase.